Reading from the N-terminus, the 291-residue chain is MTFTWPSPAKLNLFLYITGRRADGYHQLQTLFQFLNYGDEITITPRQDNEIRLLTPVEGVEHDNNLIVRAARLLQSYSDKHHAGIAHKGADIHINKRLPMGGGLGGGSSNAATVLIALNYHWQTGFTDETLAALGVSLGADVPIFVKGHAAFAEGIGEILHIAEPEEKWYLVAHPGIEISTLRVFTDPELKRDTPIRPLAALLKAPYLNDCESLVRKRFRKVEQLLSWLLEYAPSRLTGTGACVFGEFESEASARKVLNQAPEWLQGFVARGVNNSPLHNFRSGIPVLLSQ.

Residue lysine 10 is part of the active site. An ATP-binding site is contributed by 99–109 (PMGGGLGGGSS). Aspartate 141 is an active-site residue.

It belongs to the GHMP kinase family. IspE subfamily. In terms of assembly, homodimer.

The enzyme catalyses 4-CDP-2-C-methyl-D-erythritol + ATP = 4-CDP-2-C-methyl-D-erythritol 2-phosphate + ADP + H(+). It functions in the pathway isoprenoid biosynthesis; isopentenyl diphosphate biosynthesis via DXP pathway; isopentenyl diphosphate from 1-deoxy-D-xylulose 5-phosphate: step 3/6. Its function is as follows. Catalyzes the phosphorylation of the position 2 hydroxy group of 4-diphosphocytidyl-2C-methyl-D-erythritol. This is 4-diphosphocytidyl-2-C-methyl-D-erythritol kinase from Photorhabdus laumondii subsp. laumondii (strain DSM 15139 / CIP 105565 / TT01) (Photorhabdus luminescens subsp. laumondii).